Consider the following 213-residue polypeptide: Probable nicotinate-nucleotide adenylyltransferase (213 aa).

Residues 194 to 213 (RKPNNGEAKDGDVKDEEAVR) form a disordered region. Over residues 200–213 (EAKDGDVKDEEAVR) the composition is skewed to basic and acidic residues.

It belongs to the NadD family.

It catalyses the reaction nicotinate beta-D-ribonucleotide + ATP + H(+) = deamido-NAD(+) + diphosphate. Its pathway is cofactor biosynthesis; NAD(+) biosynthesis; deamido-NAD(+) from nicotinate D-ribonucleotide: step 1/1. Its function is as follows. Catalyzes the reversible adenylation of nicotinate mononucleotide (NaMN) to nicotinic acid adenine dinucleotide (NaAD). This is Probable nicotinate-nucleotide adenylyltransferase from Mycolicibacterium smegmatis (strain ATCC 700084 / mc(2)155) (Mycobacterium smegmatis).